A 419-amino-acid polypeptide reads, in one-letter code: DNA primase DnaG (419 aa).

The Toprim domain maps to 174-260 (DAIIVVEGRS…EVEDLEKDEV (87 aa)). Mg(2+) is bound by residues Glu180, Asp222, and Asp224. Positions 277 to 314 (HNILSESDSKNSHKKHNGKHNNKHSNNKHQQHETKVKE) are disordered. The segment covering 288-305 (SHKKHNGKHNNKHSNNKH) has biased composition (basic residues).

It belongs to the archaeal DnaG primase family. As to quaternary structure, forms a ternary complex with MCM helicase and DNA. Component of the archaeal exosome complex. Requires Mg(2+) as cofactor.

It carries out the reaction ssDNA + n NTP = ssDNA/pppN(pN)n-1 hybrid + (n-1) diphosphate.. Functionally, RNA polymerase that catalyzes the synthesis of short RNA molecules used as primers for DNA polymerase during DNA replication. Also part of the exosome, which is a complex involved in RNA degradation. Acts as a poly(A)-binding protein that enhances the interaction between heteromeric, adenine-rich transcripts and the exosome. This chain is DNA primase DnaG, found in Methanobrevibacter smithii (strain ATCC 35061 / DSM 861 / OCM 144 / PS).